The primary structure comprises 131 residues: Lysosomal enzyme trafficking factor (131 aa).

2 helical membrane-spanning segments follow: residues 8-28 (MGWI…YYVF) and 66-86 (LPFW…FLFL).

Belongs to the LYSET family.

It is found in the golgi apparatus membrane. Its function is as follows. Required for mannose-6-phosphate-dependent trafficking of lysosomal enzymes. LYSET bridges GlcNAc-1-phosphate transferase (GNPTAB), to the membrane-bound transcription factor site-1 protease (MBTPS1), thus allowing proteolytic activation of the GNPTAB. GNPTAB is involved in the regulation of M6P-dependent Golgi-to-lysosome trafficking of lysosomal enzymes. LYSET is thus an essential factor for maturation and delivery of lysosomal hydrolases. This Xenopus laevis (African clawed frog) protein is Lysosomal enzyme trafficking factor (lyset-b).